We begin with the raw amino-acid sequence, 31 residues long: GSIPCGESCVYIPCISSLLGCSCKSKVCYKD.

The cyclopeptide (Gly-Asp) cross-link spans 1 to 31 (GSIPCGESCVYIPCISSLLGCSCKSKVCYKD). 3 disulfides stabilise this stretch: cysteine 5–cysteine 21, cysteine 9–cysteine 23, and cysteine 14–cysteine 28.

This is a cyclic peptide. In terms of processing, contains 3 disulfide bonds.

Probably participates in a plant defense mechanism (Potential). Binds to and induces leakage in phospholipd membranes, particularly ones containing 1-palmitoyl-2-oleophosphatidylethanolamine (POPE). This chain is Cyclotide mech-4, found in Melicytus chathamicus (Chatham Island mahoe).